We begin with the raw amino-acid sequence, 329 residues long: GTPase Obg (329 aa).

The Obg domain maps to Met-1 to Leu-159. The OBG-type G domain maps to Ala-160–Glu-328. ATP-binding positions include Gly-166 to Ser-173, Phe-191 to Ile-195, Asp-213 to Gly-216, Asn-280 to Glu-283, and Ser-309 to Ala-311. Mg(2+)-binding residues include Ser-173 and Thr-193.

It belongs to the TRAFAC class OBG-HflX-like GTPase superfamily. OBG GTPase family. Monomer. Requires Mg(2+) as cofactor.

The protein resides in the cytoplasm. Functionally, an essential GTPase which binds GTP, GDP and possibly (p)ppGpp with moderate affinity, with high nucleotide exchange rates and a fairly low GTP hydrolysis rate. Plays a role in control of the cell cycle, stress response, ribosome biogenesis and in those bacteria that undergo differentiation, in morphogenesis control. This is GTPase Obg from Prochlorococcus marinus (strain MIT 9211).